A 431-amino-acid chain; its full sequence is 3'3'-cGAMP-specific phosphodiesterase 1 (431 aa).

In terms of domain architecture, HD spans 39–155 (DINHGHRVGY…IFLADRVDYL (117 aa)). Residues 231-427 (GVEEIMSIAM…YYQLSIAESP (197 aa)) enclose the HD-GYP domain. Residues histidine 288 and aspartate 289 each coordinate a divalent metal cation. Lysine 292 acts as the Proton donor in catalysis. Residues histidine 317, histidine 341, histidine 342, and aspartate 370 each coordinate a divalent metal cation.

As to quaternary structure, monomer. Requires Ca(2+) as cofactor. Mg(2+) serves as cofactor.

It catalyses the reaction 3',3'-cGAMP + H2O = 5'-pApG-3' + H(+). The enzyme catalyses 5'-pApG-3' + H2O = 5'-ApG-3' + phosphate. In terms of biological role, phosphodiesterase (PDE) that catalyzes the hydrolysis of 3'3'-cyclic GMP-AMP (3'3'-cGAMP), leading to linear 5'-pApG. Also displays 5'-nucleotidase activity, further hydrolyzing 5'-pApG to 5'-ApG. Counteracts the function of the 3'3'-cGAMP synthase DncV, and is involved in the modulation of intracellular 3'3'-cGAMP levels. Enhances bacterial chemotaxis and inhibits intestinal colonization in vivo. Thus exerts a crucial role in regulating bacterial infectivity through catalyzing 3'3'-cGAMP degradation. Is specific for 3'3'-cGAMP since it cannot degrade other cGAMP linkage isomers (3'2'-, 2'3'-, and 2'2'-cGAMPs). Is also able to hydrolyze c-di-GMP but not c-di-AMP. The polypeptide is 3'3'-cGAMP-specific phosphodiesterase 1 (Vibrio cholerae serotype O1 (strain ATCC 39315 / El Tor Inaba N16961)).